Consider the following 360-residue polypeptide: AA9 family lytic polysaccharide monooxygenase A (360 aa).

The N-terminal stretch at 1-19 (MKTSFGLLALAAAAKLVNA) is a signal peptide. Cu(2+) is bound by residues His-20 and His-102. Cys-62 and Cys-183 are disulfide-bonded. His-169 serves as a coordination point for O2. Tyr-180 provides a ligand contact to Cu(2+). A disordered region spans residues 254–293 (TSAASASSTKAPATTAAPVQTESAKPATSTTQAAAPTTLV). Residues 322 to 358 (GVVKMYAQCGGMNYSGSTTCESGLTCKQWNPYYHQCV) form the CBM1 domain. Asn-334 carries an N-linked (GlcNAc...) asparagine glycan.

Belongs to the polysaccharide monooxygenase AA9 family. Cu(2+) is required as a cofactor.

Its subcellular location is the secreted. It carries out the reaction [(1-&gt;4)-beta-D-glucosyl]n+m + reduced acceptor + O2 = 4-dehydro-beta-D-glucosyl-[(1-&gt;4)-beta-D-glucosyl]n-1 + [(1-&gt;4)-beta-D-glucosyl]m + acceptor + H2O.. Lytic polysaccharide monooxygenase (LPMO) that depolymerizes crystalline and amorphous polysaccharides via the oxidation of scissile alpha- or beta-(1-4)-glycosidic bonds, yielding C4 oxidation products. Catalysis by LPMOs requires the reduction of the active-site copper from Cu(II) to Cu(I) by a reducing agent and H(2)O(2) or O(2) as a cosubstrate. The sequence is that of AA9 family lytic polysaccharide monooxygenase A (eglD) from Aspergillus terreus (strain NIH 2624 / FGSC A1156).